Consider the following 264-residue polypeptide: Thymidylate synthase (264 aa).

Arg-21 is a binding site for dUMP. A (6R)-5,10-methylene-5,6,7,8-tetrahydrofolate-binding site is contributed by His-51. DUMP is bound at residue 126 to 127 (RR). Residue Cys-146 is the Nucleophile of the active site. Residues 166 to 169 (RSAD), Asn-177, and 207 to 209 (HLY) each bind dUMP. Asp-169 serves as a coordination point for (6R)-5,10-methylene-5,6,7,8-tetrahydrofolate. Residue Ala-263 participates in (6R)-5,10-methylene-5,6,7,8-tetrahydrofolate binding.

Belongs to the thymidylate synthase family. Bacterial-type ThyA subfamily. Homodimer.

It is found in the cytoplasm. It carries out the reaction dUMP + (6R)-5,10-methylene-5,6,7,8-tetrahydrofolate = 7,8-dihydrofolate + dTMP. Its pathway is pyrimidine metabolism; dTTP biosynthesis. Functionally, catalyzes the reductive methylation of 2'-deoxyuridine-5'-monophosphate (dUMP) to 2'-deoxythymidine-5'-monophosphate (dTMP) while utilizing 5,10-methylenetetrahydrofolate (mTHF) as the methyl donor and reductant in the reaction, yielding dihydrofolate (DHF) as a by-product. This enzymatic reaction provides an intracellular de novo source of dTMP, an essential precursor for DNA biosynthesis. The polypeptide is Thymidylate synthase (Rhizobium etli (strain ATCC 51251 / DSM 11541 / JCM 21823 / NBRC 15573 / CFN 42)).